Here is a 281-residue protein sequence, read N- to C-terminus: Bifunctional protein FolD (281 aa).

NADP(+) contacts are provided by residues 165–167 and serine 190; that span reads GRS.

It belongs to the tetrahydrofolate dehydrogenase/cyclohydrolase family. As to quaternary structure, homodimer.

The catalysed reaction is (6R)-5,10-methylene-5,6,7,8-tetrahydrofolate + NADP(+) = (6R)-5,10-methenyltetrahydrofolate + NADPH. The enzyme catalyses (6R)-5,10-methenyltetrahydrofolate + H2O = (6R)-10-formyltetrahydrofolate + H(+). Its pathway is one-carbon metabolism; tetrahydrofolate interconversion. Its function is as follows. Catalyzes the oxidation of 5,10-methylenetetrahydrofolate to 5,10-methenyltetrahydrofolate and then the hydrolysis of 5,10-methenyltetrahydrofolate to 10-formyltetrahydrofolate. The sequence is that of Bifunctional protein FolD from Polaromonas naphthalenivorans (strain CJ2).